An 88-amino-acid chain; its full sequence is uncharacterized protein (88 aa).

A run of 2 helical transmembrane segments spans residues Leu-27–His-46 and Ser-61–Ile-83.

Its subcellular location is the membrane. This is an uncharacterized protein from Saccharomyces cerevisiae (strain ATCC 204508 / S288c) (Baker's yeast).